The primary structure comprises 313 residues: Zinc transporter ZitB (313 aa).

The Cytoplasmic segment spans residues 1–20 (MAHSHSHTSSHLPEDNNARR). The chain crosses the membrane as a helical span at residues 21 to 41 (LLYAFGVTAGFMLVEVVGGFL). Topologically, residues 42–47 (SGSLAL) are periplasmic. A helical transmembrane segment spans residues 48–68 (LADAGHMLTDTAALLFALLAV). The Cytoplasmic segment spans residues 69-89 (QFSRRPPTIRHTFGWLRLTTL). The helical transmembrane segment at 90–110 (AAFVNAIALVVITILIVWEAI) threads the bilayer. Residues 111 to 121 (ERFRTPRPVEG) are Periplasmic-facing. A helical membrane pass occupies residues 122 to 142 (GMMMAIAVAGLLANILSFWLL). Over 143–159 (HHGSEEKNLNVRAAALH) the chain is Cytoplasmic. Residues 160 to 180 (VLGDLLGSVGAIIAALIIIWT) form a helical membrane-spanning segment. A topological domain (periplasmic) is located at residue glycine 181. The chain crosses the membrane as a helical span at residues 182–202 (WTPADPILSILVSLLVLRSAW). The Cytoplasmic portion of the chain corresponds to 203-313 (RLLKDSVNEL…GVSGHSHHHH (111 aa)).

It belongs to the cation diffusion facilitator (CDF) transporter (TC 2.A.4) family. SLC30A subfamily.

The protein resides in the cell inner membrane. Its function is as follows. Involved in zinc efflux across the cytoplasmic membrane, thus reducing zinc accumulation in the cytoplasm and rendering bacteria more resistant to zinc. It may contribute to zinc homeostasis at low concentrations of zinc, whereas ZntA is required for growth at more toxic concentrations. The polypeptide is Zinc transporter ZitB (zitB) (Escherichia coli (strain K12)).